We begin with the raw amino-acid sequence, 106 residues long: MKYLAAYLLLNAAGNTPDATKIKAILESVGIEIEDEKVSSVLSALEGKSVDELITEGNEKLAAVPAAGPASAGGAAAASGDAAAEEEKEEEAAEESDDDMGFGLFD.

Lys-2 participates in a covalent cross-link: Glycyl lysine isopeptide (Lys-Gly) (interchain with G-Cter in ubiquitin). Thr-16 bears the Phosphothreonine mark. Ser-40 and Ser-43 each carry phosphoserine. Lys-48 is covalently cross-linked (Glycyl lysine isopeptide (Lys-Gly) (interchain with G-Cter in ubiquitin)). Ser-49 carries the post-translational modification Phosphoserine. Residues 65-82 (PAAGPASAGGAAAASGDA) show a composition bias toward low complexity. Residues 65–106 (PAAGPASAGGAAAASGDAAAEEEKEEEAAEESDDDMGFGLFD) are disordered. Positions 83-100 (AAEEEKEEEAAEESDDDM) are enriched in acidic residues. Position 96 is a phosphoserine (Ser-96).

The protein belongs to the eukaryotic ribosomal protein P1/P2 family. In terms of assembly, component of the large ribosomal subunit (LSU). Mature yeast ribosomes consist of a small (40S) and a large (60S) subunit. The 40S small subunit contains 1 molecule of ribosomal RNA (18S rRNA) and 33 different proteins (encoded by 57 genes). The large 60S subunit contains 3 rRNA molecules (25S, 5.8S and 5S rRNA) and 46 different proteins (encoded by 81 genes). The 5 acidic ribosomal P-proteins form the stalk structure of the 60S subunit. They are organized as a pentameric complex in which uL10/P0 interacts with 2 heterodimers, P1A-P2B and P1B-P2A. In terms of processing, phosphorylation is not involved in the interaction of the acidic P proteins with the ribosome, however it is suggested to affect the ribosome activity and to participate in a possible ribosome regulatory mechanism. Post-translationally, the N-terminus is not modified.

Its subcellular location is the cytoplasm. Functionally, component of the ribosome, a large ribonucleoprotein complex responsible for the synthesis of proteins in the cell. The small ribosomal subunit (SSU) binds messenger RNAs (mRNAs) and translates the encoded message by selecting cognate aminoacyl-transfer RNA (tRNA) molecules. The large subunit (LSU) contains the ribosomal catalytic site termed the peptidyl transferase center (PTC), which catalyzes the formation of peptide bonds, thereby polymerizing the amino acids delivered by tRNAs into a polypeptide chain. The nascent polypeptides leave the ribosome through a tunnel in the LSU and interact with protein factors that function in enzymatic processing, targeting, and the membrane insertion of nascent chains at the exit of the ribosomal tunnel. The protein is Large ribosomal subunit protein P2A of Saccharomyces cerevisiae (strain ATCC 204508 / S288c) (Baker's yeast).